Here is a 251-residue protein sequence, read N- to C-terminus: Hydroxyacylglutathione hydrolase (251 aa).

Residues His53, His55, Asp57, His58, His110, Asp127, and His165 each contribute to the Zn(2+) site.

Belongs to the metallo-beta-lactamase superfamily. Glyoxalase II family. In terms of assembly, monomer. Zn(2+) serves as cofactor.

It catalyses the reaction an S-(2-hydroxyacyl)glutathione + H2O = a 2-hydroxy carboxylate + glutathione + H(+). Its pathway is secondary metabolite metabolism; methylglyoxal degradation; (R)-lactate from methylglyoxal: step 2/2. Its function is as follows. Thiolesterase that catalyzes the hydrolysis of S-D-lactoyl-glutathione to form glutathione and D-lactic acid. The protein is Hydroxyacylglutathione hydrolase of Cronobacter sakazakii (strain ATCC BAA-894) (Enterobacter sakazakii).